The following is a 486-amino-acid chain: Glycogen synthase (486 aa).

Residue Lys-15 participates in ADP-alpha-D-glucose binding.

This sequence belongs to the glycosyltransferase 1 family. Bacterial/plant glycogen synthase subfamily.

The enzyme catalyses [(1-&gt;4)-alpha-D-glucosyl](n) + ADP-alpha-D-glucose = [(1-&gt;4)-alpha-D-glucosyl](n+1) + ADP + H(+). It functions in the pathway glycan biosynthesis; glycogen biosynthesis. Its function is as follows. Synthesizes alpha-1,4-glucan chains using ADP-glucose. This Thermotoga maritima (strain ATCC 43589 / DSM 3109 / JCM 10099 / NBRC 100826 / MSB8) protein is Glycogen synthase.